The chain runs to 99 residues: UPF0213 protein PC1_0597 (99 aa).

The GIY-YIG domain maps to 8–83; the sequence is PQWYLYILRT…KQLSKNQKER (76 aa).

It belongs to the UPF0213 family.

The sequence is that of UPF0213 protein PC1_0597 from Pectobacterium carotovorum subsp. carotovorum (strain PC1).